The following is a 425-amino-acid chain: MQICKVFLTQVKKLLFVSLLFCLIAQTCWLALVPYQRQLSLDSYFFRRSREVSSRYDFTRRRHMNQTLKLSSNTYNDEPLNKTKGIKNQRENATLLMLVRNWELSGALRSMRSLEDRFNKNYQYDWTFLNDVPFDQEFIEATTAMASGRTQYALIPAEDWNRPSWINETLFEEALQLMEEKNILYGGSKSYRNMCRFNSGFFFRQKILDPYDFYFRVEPDVEYFCDFPYDPFKVMRQNNKKYGFVITMYEYEDTIPSLWEAVEEYLEETESADIDMESNAFGFVSNFDFIGKSFGVIDSNSGYNLCHFWTNFEIGDLNFFRSEKYIRFFEYLDSKGGFYYERWGDAPVHSIAASLLLKKDEIIHFDELGYKHMPFGTCPSAYYLRLQQRCLCDSNHPDNIDLNVISCLRRWWKDGSGKYFLKHDS.

The Cytoplasmic segment spans residues 1-13; sequence MQICKVFLTQVKK. Residues 14–33 traverse the membrane as a helical; Signal-anchor for type II membrane protein segment; sequence LLFVSLLFCLIAQTCWLALV. The segment at 34–89 is stem region; sequence PYQRQLSLDSYFFRRSREVSSRYDFTRRRHMNQTLKLSSNTYNDEPLNKTKGIKNQ. The Lumenal portion of the chain corresponds to 34 to 425; sequence PYQRQLSLDS…SGKYFLKHDS (392 aa). N-linked (GlcNAc...) asparagine glycans are attached at residues Asn65, Asn81, Asn92, and Asn167. Residues 90-425 form a catalytic region; sequence RENATLLMLV…SGKYFLKHDS (336 aa). The active-site Nucleophile is Glu313.

This sequence belongs to the glycosyltransferase 15 family.

It localises to the golgi apparatus membrane. The protein operates within protein modification; protein glycosylation. Involved in N-linked glycosylation. Transfers an alpha-D-mannosyl residue from GDP-mannose into lipid-linked oligosaccharide, forming an alpha-(1-&gt;2)-D-mannosyl-D-mannose linkage. The polypeptide is Probable mannosyltransferase KTR2 (KTR2) (Saccharomyces cerevisiae (strain ATCC 204508 / S288c) (Baker's yeast)).